We begin with the raw amino-acid sequence, 545 residues long: Glucose-6-phosphate isomerase (545 aa).

E351 functions as the Proton donor in the catalytic mechanism. Catalysis depends on residues H382 and K510.

The protein belongs to the GPI family.

The protein localises to the cytoplasm. It catalyses the reaction alpha-D-glucose 6-phosphate = beta-D-fructose 6-phosphate. It functions in the pathway carbohydrate biosynthesis; gluconeogenesis. It participates in carbohydrate degradation; glycolysis; D-glyceraldehyde 3-phosphate and glycerone phosphate from D-glucose: step 2/4. In terms of biological role, catalyzes the reversible isomerization of glucose-6-phosphate to fructose-6-phosphate. The chain is Glucose-6-phosphate isomerase from Shewanella baltica (strain OS185).